A 629-amino-acid chain; its full sequence is Embryonic polyadenylate-binding protein (629 aa).

RRM domains are found at residues 11–89 (ASLY…WSQR), 99–175 (GNVF…HFKS), 191–268 (TNVY…RAQK), and 294–370 (VNLY…LAQR). Residues 539-616 (QEPLTASSLA…AVAVLQAHQA (78 aa)) form the PABC domain.

It belongs to the polyadenylate-binding protein type-1 family. As to quaternary structure, interacts with dazl in an RNA-independent manner. The C-terminus can self-associate and also interact with the C-terminus of pabpc1, independently of RNA. RRM 1 and RRM 2 interact with both eif4g1 and paip1, and the C-terminus also interacts with paip1. Prior to oocyte maturation, found in a complex with dazl and pum2 proteins and spdy1 mRNA; pum2 dissociates from the complex during maturation. Interacts with the translation termination factor sup35/erf3.

It localises to the cytoplasm. In terms of biological role, binds and protects the poly(A) tail of mRNA with or without an AU-rich element (ARE) and prevents mRNA deadenylation. Stimulates the translation of mRNAs to which it is bound during early development. The polypeptide is Embryonic polyadenylate-binding protein (Xenopus tropicalis (Western clawed frog)).